The following is a 779-amino-acid chain: Beta-galactosidase 15 (779 aa).

The signal sequence occupies residues 1 to 19 (MVSLSFILCCVLVSSCAYA). N-linked (GlcNAc...) asparagine glycosylation is present at Asn148. Glu178 functions as the Proton donor in the catalytic mechanism. Glu247 serves as the catalytic Nucleophile. Residues Asn248, Asn345, Asn374, Asn489, Asn495, and Asn555 are each glycosylated (N-linked (GlcNAc...) asparagine). An SUEL-type lectin domain is found at 694-779 (VYEKNVLELS…AKRLAVEAIC (86 aa)).

This sequence belongs to the glycosyl hydrolase 35 family. Ubiquitous, with higher levels in roots and siliques.

The protein localises to the secreted. The protein resides in the extracellular space. Its subcellular location is the apoplast. It carries out the reaction Hydrolysis of terminal non-reducing beta-D-galactose residues in beta-D-galactosides.. The protein is Beta-galactosidase 15 (BGAL15) of Arabidopsis thaliana (Mouse-ear cress).